Consider the following 206-residue polypeptide: Oligoribonuclease (206 aa).

In terms of domain architecture, Exonuclease spans L20–L183. Y141 is an active-site residue.

The protein belongs to the oligoribonuclease family.

The protein localises to the cytoplasm. In terms of biological role, 3'-to-5' exoribonuclease specific for small oligoribonucleotides. The protein is Oligoribonuclease of Burkholderia cenocepacia (strain HI2424).